The sequence spans 116 residues: Large ribosomal subunit protein bL20 (116 aa).

The protein belongs to the bacterial ribosomal protein bL20 family.

In terms of biological role, binds directly to 23S ribosomal RNA and is necessary for the in vitro assembly process of the 50S ribosomal subunit. It is not involved in the protein synthesizing functions of that subunit. The protein is Large ribosomal subunit protein bL20 of Helicobacter acinonychis (strain Sheeba).